A 549-amino-acid polypeptide reads, in one-letter code: Glucose-6-phosphate isomerase (549 aa).

E353 (proton donor) is an active-site residue. Active-site residues include H384 and K513.

It belongs to the GPI family.

The protein localises to the cytoplasm. The catalysed reaction is alpha-D-glucose 6-phosphate = beta-D-fructose 6-phosphate. The protein operates within carbohydrate biosynthesis; gluconeogenesis. It participates in carbohydrate degradation; glycolysis; D-glyceraldehyde 3-phosphate and glycerone phosphate from D-glucose: step 2/4. Functionally, catalyzes the reversible isomerization of glucose-6-phosphate to fructose-6-phosphate. The chain is Glucose-6-phosphate isomerase from Brucella ovis (strain ATCC 25840 / 63/290 / NCTC 10512).